The following is an 883-amino-acid chain: Phosphoenolpyruvate carboxylase (883 aa).

Catalysis depends on residues H138 and K546.

The protein belongs to the PEPCase type 1 family. Requires Mg(2+) as cofactor.

The catalysed reaction is oxaloacetate + phosphate = phosphoenolpyruvate + hydrogencarbonate. In terms of biological role, forms oxaloacetate, a four-carbon dicarboxylic acid source for the tricarboxylic acid cycle. The sequence is that of Phosphoenolpyruvate carboxylase from Escherichia coli (strain 55989 / EAEC).